The sequence spans 320 residues: Cytochrome f (320 aa).

The first 35 residues, 1 to 35 (MQTRNTFSSIKEEITRSISVSLMIYIITWAPVSNA), serve as a signal peptide directing secretion. The heme site is built by Tyr-36, Cys-56, Cys-59, and His-60. Residues 286-306 (VQGLLFFFASVILAQIFLVLK) form a helical membrane-spanning segment.

The protein belongs to the cytochrome f family. The 4 large subunits of the cytochrome b6-f complex are cytochrome b6, subunit IV (17 kDa polypeptide, petD), cytochrome f and the Rieske protein, while the 4 small subunits are PetG, PetL, PetM and PetN. The complex functions as a dimer. Heme serves as cofactor.

Its subcellular location is the plastid. It localises to the chloroplast thylakoid membrane. Its function is as follows. Component of the cytochrome b6-f complex, which mediates electron transfer between photosystem II (PSII) and photosystem I (PSI), cyclic electron flow around PSI, and state transitions. The sequence is that of Cytochrome f from Cucumis sativus (Cucumber).